Here is a 559-residue protein sequence, read N- to C-terminus: Cytoplasmic polyadenylation element-binding protein 1 (559 aa).

The disordered stretch occupies residues Arg223–Ser244. RRM domains are found at residues Cys304–Val401 and Asn423–Glu504. Residues Cys508, Cys511, Cys520, Cys525, Cys530, Cys533, His538, and His546 each coordinate Zn(2+).

It belongs to the RRM CPEB family. Interacts with kinesin, dynein, APLP1, APLP2, TENT2/GLD2 and APP. Both phosphorylated and non phosphorylated forms interact with APLP1. Interacts with TENT4B; the interaction is required for TENT4B-mediated translational control.

The protein resides in the cytoplasm. Sequence-specific RNA-binding protein that regulates mRNA cytoplasmic polyadenylation and translation initiation during oocyte maturation and early development. Binds to the cytoplasmic polyadenylation element (CPE), an uridine-rich sequence element (consensus sequence 5'-UUUUUAU-3') within the mRNA 3'-UTR. This Carassius auratus (Goldfish) protein is Cytoplasmic polyadenylation element-binding protein 1 (cpeb1).